The chain runs to 383 residues: S-adenosylmethionine synthase (383 aa).

His-15 is a binding site for ATP. Residue Asp-17 coordinates Mg(2+). Residue Glu-43 participates in K(+) binding. The L-methionine site is built by Glu-56 and Gln-99. The tract at residues 99–109 (QSQDINQGVDR) is flexible loop. ATP is bound by residues 164 to 166 (DAK), 230 to 231 (RF), Asp-239, 245 to 246 (RK), Ala-262, and Lys-266. Residue Asp-239 coordinates L-methionine. An L-methionine-binding site is contributed by Lys-270.

It belongs to the AdoMet synthase family. In terms of assembly, homotetramer; dimer of dimers. It depends on Mg(2+) as a cofactor. K(+) serves as cofactor.

Its subcellular location is the cytoplasm. It carries out the reaction L-methionine + ATP + H2O = S-adenosyl-L-methionine + phosphate + diphosphate. Its pathway is amino-acid biosynthesis; S-adenosyl-L-methionine biosynthesis; S-adenosyl-L-methionine from L-methionine: step 1/1. Catalyzes the formation of S-adenosylmethionine (AdoMet) from methionine and ATP. The overall synthetic reaction is composed of two sequential steps, AdoMet formation and the subsequent tripolyphosphate hydrolysis which occurs prior to release of AdoMet from the enzyme. This chain is S-adenosylmethionine synthase, found in Actinobacillus succinogenes (strain ATCC 55618 / DSM 22257 / CCUG 43843 / 130Z).